Consider the following 358-residue polypeptide: MDLLFAKIICIGIFLVVTTFGCFIPHLMGLYKEKENEEKNKRVKNILSNLNCFGSGFIFSIIMFHLLPETIHIISDHGNIRIFNTSDSQMKILYIFFFVFIGFCMQLGLEYVLPVDTNICCVSNLDSKKKLEDTLSQHITKNASTTVNIEMQNIDNIDHIHEHSCEGVHTHDEKSIGKFLEILTLQSFFLTISLAIHSCIEGMIIGTSTDVNYVFISSFCILLHKWIAGVTVSLSLNSNNMNKTLKAILLLTFVFASPLGIVLGHMAKSAGQKVTCLINAVSIGTLLFIGCEILLNEIKQNISRKVRLCKWLSFCFSCLIAFALISFTTSMAPHTHGDIDTHVHVHHHDHDHDHGHNH.

Topologically, residues 1-7 are extracellular; it reads MDLLFAK. A helical membrane pass occupies residues 8–28; sequence IICIGIFLVVTTFGCFIPHLM. Topologically, residues 29-53 are cytoplasmic; the sequence is GLYKEKENEEKNKRVKNILSNLNCF. Residues 54–74 form a helical membrane-spanning segment; the sequence is GSGFIFSIIMFHLLPETIHII. Over 75–91 the chain is Extracellular; that stretch reads SDHGNIRIFNTSDSQMK. Residues 92–112 traverse the membrane as a helical segment; the sequence is ILYIFFFVFIGFCMQLGLEYV. Over 113-186 the chain is Cytoplasmic; sequence LPVDTNICCV…GKFLEILTLQ (74 aa). Residues 187-207 form a helical membrane-spanning segment; it reads SFFLTISLAIHSCIEGMIIGT. The Extracellular portion of the chain corresponds to 208-213; that stretch reads STDVNY. The helical transmembrane segment at 214 to 234 threads the bilayer; it reads VFISSFCILLHKWIAGVTVSL. Residues 235 to 246 lie on the Cytoplasmic side of the membrane; that stretch reads SLNSNNMNKTLK. A helical membrane pass occupies residues 247-267; that stretch reads AILLLTFVFASPLGIVLGHMA. Over 268–273 the chain is Extracellular; that stretch reads KSAGQK. The chain crosses the membrane as a helical span at residues 274-294; the sequence is VTCLINAVSIGTLLFIGCEIL. Topologically, residues 295–310 are cytoplasmic; that stretch reads LNEIKQNISRKVRLCK. Residues 311 to 331 traverse the membrane as a helical segment; it reads WLSFCFSCLIAFALISFTTSM. The Extracellular segment spans residues 332-358; it reads APHTHGDIDTHVHVHHHDHDHDHGHNH.

It belongs to the ZIP transporter (TC 2.A.5) family. Homodimer.

Its subcellular location is the plastid. It is found in the apicoplast. The protein localises to the cell membrane. The enzyme catalyses Zn(2+)(in) = Zn(2+)(out). It carries out the reaction Fe(2+)(in) = Fe(2+)(out). In terms of biological role, transporter for the divalent zinc cation. Mediates the influx of zinc into cells from extracellular space. Can transport divalent iron ions. Does not transport manganese and cadmium cations. This Plasmodium falciparum (isolate 3D7) protein is Zinc transporter ZIP1.